The primary structure comprises 341 residues: MAIQEELEATKQQFCAELSQVNSSKDLFDLKVRYLGKKGLFRCFADKLRECPADQKALMGASINDCKTYIENLIRDKNHAILLAEEAAEFLREKIDITLPGEPHCPGGKHIVKKVLDDVVDIFVHLGFCVREAPNIESEENNFSLLNFEEDHPARQMHDTFYLDPKTVLRTHTSNVQVRELRKGQPPIKVVAPGLCFRNEDISARSHVIFHQVEAFYLDRYVTLSDLTAMLTEFYHTFFEREIELRLRHSYFPFVEPGIEVDVSCECRQAGCSLCKHTGWLEVAGAGMIHPQVLRNSGFDPEIYTGYAVGMGIERLAMLQHGISDIRLFCENDLRFLQQFS.

Glu256 contacts Mg(2+).

This sequence belongs to the class-II aminoacyl-tRNA synthetase family. Phe-tRNA synthetase alpha subunit type 1 subfamily. In terms of assembly, tetramer of two alpha and two beta subunits. It depends on Mg(2+) as a cofactor.

It localises to the cytoplasm. It catalyses the reaction tRNA(Phe) + L-phenylalanine + ATP = L-phenylalanyl-tRNA(Phe) + AMP + diphosphate + H(+). In Chlamydia abortus (strain DSM 27085 / S26/3) (Chlamydophila abortus), this protein is Phenylalanine--tRNA ligase alpha subunit.